Here is a 71-residue protein sequence, read N- to C-terminus: Small ribosomal subunit protein bS21 (71 aa).

The segment covering 48 to 59 (AKASAVKRHAKK) has biased composition (basic residues). The tract at residues 48–71 (AKASAVKRHAKKLSRENARRIRLY) is disordered. Basic and acidic residues predominate over residues 60–71 (LSRENARRIRLY).

Belongs to the bacterial ribosomal protein bS21 family.

The sequence is that of Small ribosomal subunit protein bS21 from Aeromonas hydrophila subsp. hydrophila (strain ATCC 7966 / DSM 30187 / BCRC 13018 / CCUG 14551 / JCM 1027 / KCTC 2358 / NCIMB 9240 / NCTC 8049).